The following is a 78-amino-acid chain: Exodeoxyribonuclease 7 small subunit (78 aa).

This sequence belongs to the XseB family. As to quaternary structure, heterooligomer composed of large and small subunits.

Its subcellular location is the cytoplasm. It catalyses the reaction Exonucleolytic cleavage in either 5'- to 3'- or 3'- to 5'-direction to yield nucleoside 5'-phosphates.. Functionally, bidirectionally degrades single-stranded DNA into large acid-insoluble oligonucleotides, which are then degraded further into small acid-soluble oligonucleotides. The polypeptide is Exodeoxyribonuclease 7 small subunit (Oceanobacillus iheyensis (strain DSM 14371 / CIP 107618 / JCM 11309 / KCTC 3954 / HTE831)).